Consider the following 258-residue polypeptide: 4-hydroxy-tetrahydrodipicolinate reductase (258 aa).

NAD(+)-binding positions include Gly-8–Met-13, Gly-93–Thr-95, and Ala-117–Phe-120. His-149 serves as the catalytic Proton donor/acceptor. Position 150 (His-150) interacts with (S)-2,3,4,5-tetrahydrodipicolinate. Residue Lys-153 is the Proton donor of the active site. Gly-159–Thr-160 contributes to the (S)-2,3,4,5-tetrahydrodipicolinate binding site.

This sequence belongs to the DapB family.

It is found in the cytoplasm. It catalyses the reaction (S)-2,3,4,5-tetrahydrodipicolinate + NAD(+) + H2O = (2S,4S)-4-hydroxy-2,3,4,5-tetrahydrodipicolinate + NADH + H(+). It carries out the reaction (S)-2,3,4,5-tetrahydrodipicolinate + NADP(+) + H2O = (2S,4S)-4-hydroxy-2,3,4,5-tetrahydrodipicolinate + NADPH + H(+). The protein operates within amino-acid biosynthesis; L-lysine biosynthesis via DAP pathway; (S)-tetrahydrodipicolinate from L-aspartate: step 4/4. Its function is as follows. Catalyzes the conversion of 4-hydroxy-tetrahydrodipicolinate (HTPA) to tetrahydrodipicolinate. The chain is 4-hydroxy-tetrahydrodipicolinate reductase from Thermomicrobium roseum (strain ATCC 27502 / DSM 5159 / P-2).